The following is a 204-amino-acid chain: High frequency lysogenization protein HflD homolog (204 aa).

The protein belongs to the HflD family.

It localises to the cytoplasm. The protein localises to the cell inner membrane. This chain is High frequency lysogenization protein HflD homolog, found in Stenotrophomonas maltophilia (strain K279a).